The primary structure comprises 790 residues: Protein SEY1 (790 aa).

Topologically, residues 1–692 (MELSEGELSH…KRSIVQHITQ (692 aa)) are cytoplasmic. The 230-residue stretch at 55-284 (GNNYHIISVF…VNNELFKPEY (230 aa)) folds into the GB1/RHD3-type G domain. Position 65–72 (65–72 (GSQSTGKS)) interacts with GTP. A helical membrane pass occupies residues 693–713 (IPYYIYLIILVLGWNEFMAII). Residues 714-716 (RNP) lie on the Lumenal side of the membrane. A helical membrane pass occupies residues 717–737 (LFFSLSIVLGATVYVLYYLNL). Topologically, residues 738–790 (LKPAMLVAQRTMDEVIIMAKTKLREVLIDDHEVTGRQLNKIAGGKENIELDDM) are cytoplasmic.

The protein belongs to the TRAFAC class dynamin-like GTPase superfamily. GB1/RHD3 GTPase family. RHD3 subfamily.

The protein resides in the endoplasmic reticulum membrane. In terms of biological role, cooperates with the reticulon proteins and tubule-shaping DP1 family proteins to generate and maintain the structure of the tubular endoplasmic reticulum network. Has GTPase activity, which is required for its function in ER organization. This Candida dubliniensis (strain CD36 / ATCC MYA-646 / CBS 7987 / NCPF 3949 / NRRL Y-17841) (Yeast) protein is Protein SEY1.